Consider the following 419-residue polypeptide: Monooxygenase CTB7 (419 aa).

The protein belongs to the aromatic-ring hydroxylase family. KMO subfamily.

It participates in mycotoxin biosynthesis. In terms of biological role, monooxygenase; part of the gene cluster that mediates the biosynthesis of cercosporin, a light-activated, non-host-selective toxin. The perylenequinone chromophore of cercosporin absorbs light energy to attain an electronically-activated triplet state and produces active oxygen species such as the hydroxyl radical, superoxide, hydrogen peroxide or singlet oxygen upon reaction with oxygen molecules. These reactive oxygen species cause damage to various cellular components including lipids, proteins and nucleic acids. The first step of cercosporin biosynthesis is performed by the polyketide synthase CTB1 which catalyzes the formation of nor-toralactone. The starter unit acyltransferase (SAT) domain of CTB1 initiates polyketide extension by the selective utilization of acetyl-CoA, which is elongated to the heptaketide in the beta-ketoacyl synthase (KS) domain by successive condensations with six malonyl units introduced by the malonyl acyltransferase (MAT) domain. The product template (PT) domain catalyzes C4-C9 and C2-C11 aldol cyclizations and dehydrations to a trihydroxynaphthalene, which is thought to be delivered to the thioesterase (TE) domain for product release. The bifunctional enzyme CTB3 then methylates nor-toralactone to toralactone before conducting an unusual oxidative aromatic ring opening. The O-methyltransferase CTB2 further methylates the nascent OH-6 of the CBT3 product, blocking further oxidation at this site before the reductase CTB6 reduces the 2-oxopropyl ketone at position C7, giving naphthalene. The FAD-dependent monooxygenase CTB5 in concert with the multicopper oxidase CTB12 are responsible for homodimerization of naphthalene with CTB7 installing the dioxepine moiety, finally producing cercosporin. The fasciclin domain-containing protein CTB11 might act with CTB5 and CTB12 whereas the roles of CTB9 and CTB10 have still to be elucidated. This chain is Monooxygenase CTB7, found in Cercospora beticola (Sugarbeet leaf spot fungus).